The chain runs to 301 residues: Inosose dehydratase (301 aa).

This sequence belongs to the IolE/MocC family. The cofactor is glutathione. It depends on Co(2+) as a cofactor. Mn(2+) is required as a cofactor.

It catalyses the reaction scyllo-inosose = 3D-3,5/4-trihydroxycyclohexane-1,2-dione + H2O. In terms of biological role, catalyzes the dehydration of inosose (2-keto-myo-inositol, 2KMI or 2,4,6/3,5-pentahydroxycyclohexanone) to 3D-(3,5/4)-trihydroxycyclohexane-1,2-dione (D-2,3-diketo-4-deoxy-epi-inositol). This Salmonella typhimurium (strain LT2 / SGSC1412 / ATCC 700720) protein is Inosose dehydratase.